A 161-amino-acid chain; its full sequence is Regulator of ribonuclease activity A (161 aa).

Belongs to the RraA family. As to quaternary structure, homotrimer. Binds to both RNA-binding sites in the C-terminal region of Rne and to RhlB.

It is found in the cytoplasm. Its function is as follows. Globally modulates RNA abundance by binding to RNase E (Rne) and regulating its endonucleolytic activity. Can modulate Rne action in a substrate-dependent manner by altering the composition of the degradosome. Modulates RNA-binding and helicase activities of the degradosome. The chain is Regulator of ribonuclease activity A from Idiomarina loihiensis (strain ATCC BAA-735 / DSM 15497 / L2-TR).